The chain runs to 89 residues: Small ribosomal subunit protein uS15 (89 aa).

This sequence belongs to the universal ribosomal protein uS15 family. As to quaternary structure, part of the 30S ribosomal subunit. Forms a bridge to the 50S subunit in the 70S ribosome, contacting the 23S rRNA.

One of the primary rRNA binding proteins, it binds directly to 16S rRNA where it helps nucleate assembly of the platform of the 30S subunit by binding and bridging several RNA helices of the 16S rRNA. In terms of biological role, forms an intersubunit bridge (bridge B4) with the 23S rRNA of the 50S subunit in the ribosome. The polypeptide is Small ribosomal subunit protein uS15 (Salinispora tropica (strain ATCC BAA-916 / DSM 44818 / JCM 13857 / NBRC 105044 / CNB-440)).